The following is a 146-amino-acid chain: Anti-sigma F factor (146 aa).

Belongs to the anti-sigma-factor family.

It carries out the reaction L-seryl-[protein] + ATP = O-phospho-L-seryl-[protein] + ADP + H(+). The catalysed reaction is L-threonyl-[protein] + ATP = O-phospho-L-threonyl-[protein] + ADP + H(+). Binds to sigma F and blocks its ability to form an RNA polymerase holoenzyme (E-sigma F). Phosphorylates SpoIIAA on a serine residue. This phosphorylation may enable SpoIIAA to act as an anti-anti-sigma factor that counteracts SpoIIAB and thus releases sigma F from inhibition. The protein is Anti-sigma F factor of Bacillus cereus (strain G9842).